Here is an 866-residue protein sequence, read N- to C-terminus: MSNNLQDILAAASGYQSVTSEPALNRKRPKTLDDYPVIPPASKKVSVISSDLTLHIGFDTEYVFNPETRQNDILSYQSYVVLPDNTGISNIIYPPDSQKKSRLSFKDFLCQTITPLLETGVITKWPGIINIYAHFIRADIASFANFWSDYKILLKGIRGTVSSFKNRYGIDFDEQQERRVKTEQIMFDKRTSPPRCSNVAFIDTLLITPGGMGLAECGELLGLPKLTIPAPYSITNMREYLLGDRAGFEAYALRDAEIAVRYALQVRNFCARELMIDRVPATIGAMAVSRFTKTLKENNMSPEVCLGTHIKTRELWLTEKQAFRTIKNPASVPSRELFETFPINCYHGGRNECFMMGVTPSDHWYDYDLAGAYTTGLLDILTPDYGNIRLSKNPDDYCGHVMGFALVTFRFPESVPYPSLPVRTDQYGLFFPLSGESWATAPEIELALSLGAEMTIHNGIIVPWICDTSPHNSESTSVFLPFVQQVRENRNRHIKGSLEEKFWKEIGNSLYGKLAQGLRAKTAFDTARGLNRSLPPSSVTQPFFAAHVTGFIRAVVGELMNALPSDSSVVSVTTDGFLTNCPLDKINMSGPLSSRFQSLCDIVDPGSSMLTCKHEVSQLIAMKTRGQLTYKAIQGKPVVHARAGVKPPADIPRSDYNDYMVDLYLNRLPGQTLSRSTLISTREMWLSESDLVSREQDIRLNLEFDFKRQPVRPAMNEGHLLMFSRPWDNMEEALQQRSLFDDWRQTHTLKTLADWDDWCDFLYCRTVFSDMKLKVGSKRSDDILVRLFLRALTQCQWGLMLKDKKSYSCKEVAEWLTSEGYSVTVTDVKNAVRAKIPQMKFSSVTPRMKSLMDIIARKYPTFCLPV.

The interval S50–M286 is exonuclease domain. The tract at residues A287–Y385 is palm1 domain. The TPR1 domain stretch occupies residues G386–P481. The segment at F482–T522 is fingers domain. The TPR2 domain stretch occupies residues A523–T549. The segment at G550 to L678 is palm2 domain. Positions I679 to V866 are thumb domain.

Requires Mn(2+) as cofactor.

It catalyses the reaction DNA(n) + a 2'-deoxyribonucleoside 5'-triphosphate = DNA(n+1) + diphosphate. In terms of biological role, DNA polymerase with primer-independent templated DNA polymerization activity, primer-dependent DNA polymerization activity with strand displacement, translesion synthesis activity across non-bulky base damage, 3'-5' exodeoxyribonuclease activity, and de novo primer synthesis activity. The enzyme is processive and faithful. Translation synthesis across abasic sites is coupled to de novo primer synthesis. Overexpression of wild-type protein increases survival of cells upon mitomycin C or UV treatment. The sequence is that of Primer-independent DNA polymerase PolB (pi-polB) from Escherichia coli.